Consider the following 192-residue polypeptide: uncharacterized protein (192 aa).

The signal sequence occupies residues 1–17 (MFKKILFPLVALFMLAG). A lipid anchor (N-palmitoyl cysteine) is attached at Cys-18. Cys-18 carries the S-diacylglycerol cysteine lipid modification.

To H.influenzae HI_0162.

Its subcellular location is the cell membrane. This is an uncharacterized protein from Escherichia coli O6:H1 (strain CFT073 / ATCC 700928 / UPEC).